A 138-amino-acid chain; its full sequence is MSEEERNRGAEPEERAEALADTGDLPESEVAGDLGEAAQRGPAFDRDAGKVQKDTRRGRRKERVGLVVSDAADKTVTVSVETLKEHPMYKKRIRRSKKFLVHDERNEARVGDTVRIIETRPLSRRKRWRLASIISRAE.

Composition is skewed to basic and acidic residues over residues 1–18 (MSEEERNRGAEPEERAEA) and 43–55 (AFDRDAGKVQKDT). The segment at 1 to 62 (MSEEERNRGA…KDTRRGRRKE (62 aa)) is disordered.

It belongs to the universal ribosomal protein uS17 family. Part of the 30S ribosomal subunit.

Functionally, one of the primary rRNA binding proteins, it binds specifically to the 5'-end of 16S ribosomal RNA. In Rubrobacter xylanophilus (strain DSM 9941 / JCM 11954 / NBRC 16129 / PRD-1), this protein is Small ribosomal subunit protein uS17.